A 57-amino-acid polypeptide reads, in one-letter code: Serine protease inhibitor Kazal-type 1 (57 aa).

The 54-residue stretch at 4-57 (LQRQANCNLKVNGCNKIYNPICGSDGITYANECLLCLENKKRQTSILVEKSGPC) folds into the Kazal-like domain. 3 cysteine pairs are disulfide-bonded: Cys10–Cys39, Cys17–Cys36, and Cys25–Cys57.

The protein resides in the secreted. In terms of biological role, serine protease inhibitor which exhibits anti-trypsin activity. In the pancreas, protects against trypsin-catalyzed premature activation of zymogens. Its function is as follows. In the male reproductive tract, binds to sperm heads where it modulates sperm capacitance by inhibiting calcium uptake and nitrogen oxide (NO) production. The polypeptide is Serine protease inhibitor Kazal-type 1 (SPINK1) (Canis lupus familiaris (Dog)).